We begin with the raw amino-acid sequence, 256 residues long: Hydroxyethylthiazole kinase (256 aa).

M38 provides a ligand contact to substrate. 2 residues coordinate ATP: R114 and T159. G186 lines the substrate pocket.

The protein belongs to the Thz kinase family. Requires Mg(2+) as cofactor.

The enzyme catalyses 5-(2-hydroxyethyl)-4-methylthiazole + ATP = 4-methyl-5-(2-phosphooxyethyl)-thiazole + ADP + H(+). It functions in the pathway cofactor biosynthesis; thiamine diphosphate biosynthesis; 4-methyl-5-(2-phosphoethyl)-thiazole from 5-(2-hydroxyethyl)-4-methylthiazole: step 1/1. Functionally, catalyzes the phosphorylation of the hydroxyl group of 4-methyl-5-beta-hydroxyethylthiazole (THZ). The chain is Hydroxyethylthiazole kinase from Streptococcus agalactiae serotype Ia (strain ATCC 27591 / A909 / CDC SS700).